The chain runs to 179 residues: Large ribosomal subunit protein uL5 (179 aa).

It belongs to the universal ribosomal protein uL5 family. In terms of assembly, part of the 50S ribosomal subunit; part of the 5S rRNA/L5/L18/L25 subcomplex. Contacts the 5S rRNA and the P site tRNA. Forms a bridge to the 30S subunit in the 70S ribosome.

Its function is as follows. This is one of the proteins that bind and probably mediate the attachment of the 5S RNA into the large ribosomal subunit, where it forms part of the central protuberance. In the 70S ribosome it contacts protein S13 of the 30S subunit (bridge B1b), connecting the 2 subunits; this bridge is implicated in subunit movement. Contacts the P site tRNA; the 5S rRNA and some of its associated proteins might help stabilize positioning of ribosome-bound tRNAs. This chain is Large ribosomal subunit protein uL5, found in Dictyoglomus thermophilum (strain ATCC 35947 / DSM 3960 / H-6-12).